Consider the following 92-residue polypeptide: Phosphoribosyl-ATP pyrophosphatase (92 aa).

It belongs to the PRA-PH family.

The protein localises to the cytoplasm. The catalysed reaction is 1-(5-phospho-beta-D-ribosyl)-ATP + H2O = 1-(5-phospho-beta-D-ribosyl)-5'-AMP + diphosphate + H(+). The protein operates within amino-acid biosynthesis; L-histidine biosynthesis; L-histidine from 5-phospho-alpha-D-ribose 1-diphosphate: step 2/9. The sequence is that of Phosphoribosyl-ATP pyrophosphatase from Leptospira borgpetersenii serovar Hardjo-bovis (strain JB197).